A 415-amino-acid polypeptide reads, in one-letter code: Zona pellucida-like domain-containing protein 1 (415 aa).

Residues methionine 1–alanine 19 form the signal peptide. The Extracellular portion of the chain corresponds to glutamine 20–serine 372. In terms of domain architecture, ZP spans tyrosine 43–aspartate 320. 2 cysteine pairs are disulfide-bonded: cysteine 44–cysteine 155 and cysteine 79–cysteine 104. Asparagine 164 carries N-linked (GlcNAc...) asparagine glycosylation. Disulfide bonds link cysteine 235-cysteine 296 and cysteine 255-cysteine 313. The interval arginine 323 to serine 359 is disordered. Low complexity predominate over residues serine 328–serine 339. Residues threonine 350–serine 359 show a composition bias toward polar residues. Residues alanine 373–leucine 393 form a helical membrane-spanning segment. The Cytoplasmic portion of the chain corresponds to alanine 394–aspartate 415.

Post-translationally, proteolytically cleaved before the transmembrane segment to yield the secreted form found in the extracellular matrix of the cupula.

It localises to the cytoplasmic vesicle membrane. It is found in the secreted. The protein resides in the extracellular space. Its subcellular location is the extracellular matrix. Its function is as follows. Glycoprotein which is a component of the gelatinous extracellular matrix in the cupulae of the vestibular organ. The protein is Zona pellucida-like domain-containing protein 1 (ZPLD1) of Macaca fascicularis (Crab-eating macaque).